The following is a 475-amino-acid chain: ADP-ribosyltransferase toxin AexT (475 aa).

The 134-residue stretch at 93 to 226 (VSPEDLQRLM…LQRAVKAEVA (134 aa)) folds into the Bacterial Rho-GAP domain. Residues 260-436 (EGLQEQFGLE…RVLEEASLGE (177 aa)) form the TR mART core domain. Active-site residues include Arg340, Ser364, and Glu403.

The protein localises to the secreted. In terms of biological role, directly involved in the toxicity for RTG-2 (rainbow trout gonad) fish cells. This is ADP-ribosyltransferase toxin AexT (aexT) from Aeromonas salmonicida.